Consider the following 385-residue polypeptide: Galactokinase (385 aa).

A substrate-binding site is contributed by 34 to 37; it reads EHTD. 124 to 130 is a binding site for ATP; it reads SAGLSSS. Residues Ser130 and Glu162 each contribute to the Mg(2+) site. Asp174 acts as the Proton acceptor in catalysis. Substrate is bound at residue Tyr223.

It belongs to the GHMP kinase family. GalK subfamily.

Its subcellular location is the cytoplasm. It catalyses the reaction alpha-D-galactose + ATP = alpha-D-galactose 1-phosphate + ADP + H(+). The protein operates within carbohydrate metabolism; galactose metabolism. Catalyzes the transfer of the gamma-phosphate of ATP to D-galactose to form alpha-D-galactose-1-phosphate (Gal-1-P). This Pasteurella multocida (strain Pm70) protein is Galactokinase.